Reading from the N-terminus, the 356-residue chain is Protein RecA (356 aa).

68-75 (GPESSGKT) provides a ligand contact to ATP.

Belongs to the RecA family.

It is found in the cytoplasm. Can catalyze the hydrolysis of ATP in the presence of single-stranded DNA, the ATP-dependent uptake of single-stranded DNA by duplex DNA, and the ATP-dependent hybridization of homologous single-stranded DNAs. It interacts with LexA causing its activation and leading to its autocatalytic cleavage. The protein is Protein RecA of Clostridium botulinum (strain Alaska E43 / Type E3).